The primary structure comprises 876 residues: Alanine--tRNA ligase (876 aa).

The Zn(2+) site is built by histidine 565, histidine 569, cysteine 667, and histidine 671.

This sequence belongs to the class-II aminoacyl-tRNA synthetase family. Zn(2+) serves as cofactor.

The protein resides in the cytoplasm. The catalysed reaction is tRNA(Ala) + L-alanine + ATP = L-alanyl-tRNA(Ala) + AMP + diphosphate. In terms of biological role, catalyzes the attachment of alanine to tRNA(Ala) in a two-step reaction: alanine is first activated by ATP to form Ala-AMP and then transferred to the acceptor end of tRNA(Ala). Also edits incorrectly charged Ser-tRNA(Ala) and Gly-tRNA(Ala) via its editing domain. In Staphylococcus aureus (strain USA300), this protein is Alanine--tRNA ligase.